The sequence spans 161 residues: Nucleotide-binding protein H16_A3060 (161 aa).

Belongs to the YajQ family.

Its function is as follows. Nucleotide-binding protein. The polypeptide is Nucleotide-binding protein H16_A3060 (Cupriavidus necator (strain ATCC 17699 / DSM 428 / KCTC 22496 / NCIMB 10442 / H16 / Stanier 337) (Ralstonia eutropha)).